A 327-amino-acid chain; its full sequence is Aspartate--ammonia ligase (327 aa).

This sequence belongs to the class-II aminoacyl-tRNA synthetase family. AsnA subfamily.

The protein localises to the cytoplasm. It carries out the reaction L-aspartate + NH4(+) + ATP = L-asparagine + AMP + diphosphate + H(+). It participates in amino-acid biosynthesis; L-asparagine biosynthesis; L-asparagine from L-aspartate (ammonia route): step 1/1. The sequence is that of Aspartate--ammonia ligase from Fusobacterium nucleatum subsp. nucleatum (strain ATCC 25586 / DSM 15643 / BCRC 10681 / CIP 101130 / JCM 8532 / KCTC 2640 / LMG 13131 / VPI 4355).